A 521-amino-acid polypeptide reads, in one-letter code: D-aminoacyl-tRNA deacylase (521 aa).

2 disordered regions span residues 323 to 353 (AVGT…SEDS) and 499 to 521 (VFST…SSSS). The span at 343 to 353 (VDAERTESEDS) shows a compositional bias: basic and acidic residues. Residues 501 to 521 (STSSSSSSSSSSSSSSSSSSS) show a composition bias toward low complexity.

Belongs to the DtdA deacylase family. As to quaternary structure, monomer. Requires Zn(2+) as cofactor.

The catalysed reaction is a D-aminoacyl-tRNA + H2O = a tRNA + a D-alpha-amino acid + H(+). It catalyses the reaction glycyl-tRNA(Ala) + H2O = tRNA(Ala) + glycine + H(+). In terms of biological role, D-aminoacyl-tRNA deacylase with broad substrate specificity. By recycling D-aminoacyl-tRNA to D-amino acids and free tRNA molecules, this enzyme counteracts the toxicity associated with the formation of D-aminoacyl-tRNA entities in vivo. This chain is D-aminoacyl-tRNA deacylase, found in Haloquadratum walsbyi (strain DSM 16790 / HBSQ001).